The sequence spans 780 residues: Protein phosphatase 1 regulatory subunit 21 (780 aa).

Coiled coils occupy residues 1–207 and 556–607; these read MASA…LKTL and ESRE…LKNT. The tract at residues 84–104 is disordered; it reads EPRGKKNKKSGESSSQLSQEQ. A compositionally biased stretch (low complexity) spans 95-104; it reads ESSSQLSQEQ. Thr652 carries the phosphothreonine modification. A coiled-coil region spans residues 693–742; that stretch reads YAECRALSKRLALAEKSKEALTEEMKLASQNISRLQDELTTTKRSYEDQL. Positions 760 to 780 are disordered; it reads REEIDTLKMSSKGNSKKNKSR.

As to quaternary structure, component of the FERRY complex, composed of five subunits: TBCK, PPP1R21, FERRY3, CRYZL1 and GATAD1, with a ratio of 1:2:1:2:4 respectively. PPP1R21 serves as a binding hub connecting all five complex subunits to mediate the binding to specific mitochondrial mRNAs. Interacts with the GTP-bound form of RAB5A (via its C-terminal region); linking the mRNP complex onto trafficking endosomes for active mRNA transport. Interacts with PPP1CA.

The protein localises to the early endosome. Component of the FERRY complex (Five-subunit Endosomal Rab5 and RNA/ribosome intermediary). The FERRY complex directly interacts with mRNAs and RAB5A, and functions as a RAB5A effector involved in the localization and the distribution of specific mRNAs most likely by mediating their endosomal transport. The complex recruits mRNAs and ribosomes to early endosomes through direct mRNA-interaction. In the complex, PPP1R21 serves as a binding hub connecting all five complex subunits and mediating the binding to mRNA and early endosomes via RAB5A. Putative regulator of protein phosphatase 1 (PP1) activity. May play a role in the endosomal sorting process or in endosome maturation pathway. The polypeptide is Protein phosphatase 1 regulatory subunit 21 (PPP1R21) (Homo sapiens (Human)).